A 340-amino-acid polypeptide reads, in one-letter code: NADH-quinone oxidoreductase subunit H (340 aa).

A run of 8 helical transmembrane segments spans residues 4–24 (TIGI…PLLI), 78–98 (YLFV…WAVI), 113–133 (VLYL…AGWA), 151–171 (VSYE…AGSM), 184–204 (MLHW…ISGI), 244–264 (SMIL…LSPF), 273–293 (IFFI…FLFV), and 316–336 (VLIP…VAHV).

The protein belongs to the complex I subunit 1 family. NDH-1 is composed of 14 different subunits. Subunits NuoA, H, J, K, L, M, N constitute the membrane sector of the complex.

Its subcellular location is the cell inner membrane. It catalyses the reaction a quinone + NADH + 5 H(+)(in) = a quinol + NAD(+) + 4 H(+)(out). Functionally, NDH-1 shuttles electrons from NADH, via FMN and iron-sulfur (Fe-S) centers, to quinones in the respiratory chain. The immediate electron acceptor for the enzyme in this species is believed to be ubiquinone. Couples the redox reaction to proton translocation (for every two electrons transferred, four hydrogen ions are translocated across the cytoplasmic membrane), and thus conserves the redox energy in a proton gradient. This subunit may bind ubiquinone. The sequence is that of NADH-quinone oxidoreductase subunit H from Legionella pneumophila (strain Lens).